A 119-amino-acid polypeptide reads, in one-letter code: Large ribosomal subunit protein uL18 (119 aa).

The protein belongs to the universal ribosomal protein uL18 family. In terms of assembly, part of the 50S ribosomal subunit; part of the 5S rRNA/L5/L18/L25 subcomplex. Contacts the 5S and 23S rRNAs.

Functionally, this is one of the proteins that bind and probably mediate the attachment of the 5S RNA into the large ribosomal subunit, where it forms part of the central protuberance. This is Large ribosomal subunit protein uL18 from Clostridium botulinum (strain Langeland / NCTC 10281 / Type F).